The primary structure comprises 526 residues: D-arabinono-1,4-lactone oxidase (526 aa).

The region spanning 22-196 (FWSRPSLYFQ…VYATLRTVPA (175 aa)) is the FAD-binding PCMH-type domain. The residue at position 59 (His-59) is a Pros-8alpha-FAD histidine.

Belongs to the oxygen-dependent FAD-linked oxidoreductase family. Requires FAD as cofactor.

It is found in the mitochondrion membrane. It catalyses the reaction D-arabinono-1,4-lactone + O2 = dehydro-D-arabinono-1,4-lactone + H2O2 + H(+). It functions in the pathway cofactor biosynthesis; D-erythroascorbate biosynthesis; dehydro-D-arabinono-1,4-lactone from D-arabinose: step 2/2. The polypeptide is D-arabinono-1,4-lactone oxidase (ALO1) (Yarrowia lipolytica (strain CLIB 122 / E 150) (Yeast)).